The primary structure comprises 299 residues: Probable lipid kinase YegS (299 aa).

Residues 2–133 (AEFPASLLIL…IDMAQVNKQT (132 aa)) enclose the DAGKc domain. ATP contacts are provided by residues Thr-40, 66 to 72 (GDGTINE), and Thr-95. The Mg(2+) site is built by Leu-215, Asp-218, and Leu-220. Glu-271 acts as the Proton acceptor in catalysis.

It belongs to the diacylglycerol/lipid kinase family. YegS lipid kinase subfamily. Requires Mg(2+) as cofactor. Ca(2+) serves as cofactor.

It localises to the cytoplasm. Its function is as follows. Probably phosphorylates lipids; the in vivo substrate is unknown. The protein is Probable lipid kinase YegS of Escherichia coli (strain K12 / MC4100 / BW2952).